Consider the following 249-residue polypeptide: Adenosylcobinamide-GDP ribazoletransferase (249 aa).

6 helical membrane passes run 36 to 56, 57 to 77, 106 to 126, 133 to 153, 188 to 208, and 226 to 246; these read LVGFLLGSIAAGVCYAMHSIG, LNLAADVLGLVTIITLTGGLH, VGAMGVIALATVLLLKIAFLF, KLTAFIMAPMAGRWAMVLAIT, LWLFGLPGLALLGIVFFITWL, and GALGEMIETWVIFLILLGQQI.

The protein belongs to the CobS family. Mg(2+) is required as a cofactor.

It is found in the cell membrane. The enzyme catalyses alpha-ribazole + adenosylcob(III)inamide-GDP = adenosylcob(III)alamin + GMP + H(+). It carries out the reaction alpha-ribazole 5'-phosphate + adenosylcob(III)inamide-GDP = adenosylcob(III)alamin 5'-phosphate + GMP + H(+). It functions in the pathway cofactor biosynthesis; adenosylcobalamin biosynthesis; adenosylcobalamin from cob(II)yrinate a,c-diamide: step 7/7. In terms of biological role, joins adenosylcobinamide-GDP and alpha-ribazole to generate adenosylcobalamin (Ado-cobalamin). Also synthesizes adenosylcobalamin 5'-phosphate from adenosylcobinamide-GDP and alpha-ribazole 5'-phosphate. This chain is Adenosylcobinamide-GDP ribazoletransferase, found in Desulforamulus reducens (strain ATCC BAA-1160 / DSM 100696 / MI-1) (Desulfotomaculum reducens).